Consider the following 214-residue polypeptide: LOB domain-containing protein 7 (214 aa).

The LOB domain maps to 12-113; the sequence is TACAACKHQR…TELNLTRQQI (102 aa).

The protein belongs to the LOB domain-containing protein family.

This Arabidopsis thaliana (Mouse-ear cress) protein is LOB domain-containing protein 7 (LBD7).